The following is a 157-amino-acid chain: 3-hydroxybutyryl-CoA dehydratase (157 aa).

In terms of domain architecture, MaoC-like spans 22 to 120; the sequence is KKEISSSDVV…IPERRRARLA (99 aa).

The catalysed reaction is (3R)-3-hydroxybutanoyl-CoA = (2E)-butenoyl-CoA + H2O. Involved in the regeneration of glyoxylate from a molecule of acetyl-CoA. In Methylorubrum extorquens (strain ATCC 14718 / DSM 1338 / JCM 2805 / NCIMB 9133 / AM1) (Methylobacterium extorquens), this protein is 3-hydroxybutyryl-CoA dehydratase.